We begin with the raw amino-acid sequence, 221 residues long: tRNA (guanine-N(7)-)-methyltransferase (221 aa).

Residues Glu-51, Glu-76, Asp-103, and Asp-125 each contribute to the S-adenosyl-L-methionine site. The active site involves Asp-125. The substrate site is built by Lys-129 and Asp-161.

Belongs to the class I-like SAM-binding methyltransferase superfamily. TrmB family.

The catalysed reaction is guanosine(46) in tRNA + S-adenosyl-L-methionine = N(7)-methylguanosine(46) in tRNA + S-adenosyl-L-homocysteine. Its pathway is tRNA modification; N(7)-methylguanine-tRNA biosynthesis. Its function is as follows. Catalyzes the formation of N(7)-methylguanine at position 46 (m7G46) in tRNA. This is tRNA (guanine-N(7)-)-methyltransferase from Wolbachia pipientis wMel.